The sequence spans 183 residues: UPF0134 protein MPN_100 (183 aa).

It belongs to the UPF0134 family.

The chain is UPF0134 protein MPN_100 from Mycoplasma pneumoniae (strain ATCC 29342 / M129 / Subtype 1) (Mycoplasmoides pneumoniae).